We begin with the raw amino-acid sequence, 218 residues long: N-(5'-phosphoribosyl)anthranilate isomerase (218 aa).

It belongs to the TrpF family.

The enzyme catalyses N-(5-phospho-beta-D-ribosyl)anthranilate = 1-(2-carboxyphenylamino)-1-deoxy-D-ribulose 5-phosphate. Its pathway is amino-acid biosynthesis; L-tryptophan biosynthesis; L-tryptophan from chorismate: step 3/5. The polypeptide is N-(5'-phosphoribosyl)anthranilate isomerase (Rhodopseudomonas palustris (strain BisB5)).